Reading from the N-terminus, the 270-residue chain is Beta carbonic anhydrase 1 (270 aa).

Residues C39, D41, H105, and C108 each contribute to the Zn(2+) site.

Belongs to the beta-class carbonic anhydrase family. Zn(2+) serves as cofactor.

It carries out the reaction hydrogencarbonate + H(+) = CO2 + H2O. In terms of biological role, reversible hydration of carbon dioxide. The sequence is that of Beta carbonic anhydrase 1 from Caenorhabditis briggsae.